Consider the following 147-residue polypeptide: Probable cytidine deaminase (147 aa).

Residues 4 to 130 form the CMP/dCMP-type deaminase domain; that stretch reads EELEKCIDAA…KLLPGLFSQE (127 aa). Residue 45–51 participates in substrate binding; sequence NVENSSY. Cys56 contributes to the Zn(2+) binding site. Glu58 (proton donor) is an active-site residue. Residues Cys90 and Cys93 each contribute to the Zn(2+) site.

This sequence belongs to the cytidine and deoxycytidylate deaminase family. Zn(2+) is required as a cofactor.

It catalyses the reaction cytidine + H2O + H(+) = uridine + NH4(+). The catalysed reaction is 2'-deoxycytidine + H2O + H(+) = 2'-deoxyuridine + NH4(+). Functionally, this enzyme scavenges exogenous and endogenous cytidine and 2'-deoxycytidine for UMP synthesis. This chain is Probable cytidine deaminase (cda), found in Dictyostelium discoideum (Social amoeba).